The sequence spans 216 residues: N-glycosylase/DNA lyase (216 aa).

Positions 27, 48, and 59 each coordinate 8-oxoguanine. A helix-hairpin-helix region spans residues 106 to 170; it reads EHYYENMVAL…LDYRLKKINP (65 aa). The active-site Schiff-base intermediate with DNA is Lys-130. Residues Phe-134 and Pro-160 each contribute to the 8-oxoguanine site. The active site involves Asp-162. Positions 190 and 194 each coordinate 8-oxoguanine.

Belongs to the archaeal N-glycosylase/DNA lyase (AGOG) family.

The catalysed reaction is 2'-deoxyribonucleotide-(2'-deoxyribose 5'-phosphate)-2'-deoxyribonucleotide-DNA = a 3'-end 2'-deoxyribonucleotide-(2,3-dehydro-2,3-deoxyribose 5'-phosphate)-DNA + a 5'-end 5'-phospho-2'-deoxyribonucleoside-DNA + H(+). DNA repair enzyme that is part of the base excision repair (BER) pathway; protects from oxidative damage by removing the major product of DNA oxidation, 8-oxoguanine (GO), from single- and double-stranded DNA substrates. This is N-glycosylase/DNA lyase from Nanoarchaeum equitans (strain Kin4-M).